The primary structure comprises 245 residues: 2,3-bisphosphoglycerate-dependent phosphoglycerate mutase (245 aa).

Residues Arg-8–Asn-15, Thr-21–Gly-22, Arg-60, Glu-87–Tyr-90, Lys-98, Arg-114–Arg-115, and Gly-183–Asn-184 each bind substrate. His-9 serves as the catalytic Tele-phosphohistidine intermediate. The active-site Proton donor/acceptor is the Glu-87.

Belongs to the phosphoglycerate mutase family. BPG-dependent PGAM subfamily.

It catalyses the reaction (2R)-2-phosphoglycerate = (2R)-3-phosphoglycerate. It functions in the pathway carbohydrate degradation; glycolysis; pyruvate from D-glyceraldehyde 3-phosphate: step 3/5. In terms of biological role, catalyzes the interconversion of 2-phosphoglycerate and 3-phosphoglycerate. The sequence is that of 2,3-bisphosphoglycerate-dependent phosphoglycerate mutase from Bacillus mycoides (strain KBAB4) (Bacillus weihenstephanensis).